The primary structure comprises 1166 residues: Topoisomerase 1-associated factor 1 (1166 aa).

4 disordered regions span residues 333 to 358 (KMDE…NNDF), 564 to 594 (QVRS…ASDD), 881 to 981 (DPYT…RARL), and 1023 to 1145 (ALLT…DENA). The span at 585 to 594 (DNNEEHASDD) shows a compositional bias: acidic residues. Positions 881–893 (DPYTGDIEHDPRQ) are enriched in basic and acidic residues. The segment covering 916 to 926 (FGSESEGEDVP) has biased composition (acidic residues). Residues 966–981 (LEARRKARQENTRARL) are compositionally biased toward basic and acidic residues. A compositionally biased stretch (acidic residues) spans 1087–1107 (TEDDENTSATSDEDDEFDFDD). Residues 1109 to 1142 (LAFRRDRDLDRDPVLPSHAEDMQPTDTRELRDND) show a composition bias toward basic and acidic residues.

It belongs to the timeless family.

The protein resides in the nucleus. Its function is as follows. Involved in chromosome segregation during meiosis and DNA damage repair. The protein is Topoisomerase 1-associated factor 1 (tof1) of Aspergillus oryzae (strain ATCC 42149 / RIB 40) (Yellow koji mold).